The sequence spans 61 residues: Large ribosomal subunit protein bL32 (61 aa).

The segment covering Met-1–Arg-16 has biased composition (basic residues). The disordered stretch occupies residues Met-1–Pro-39. Residues Ile-28 to Pro-39 show a composition bias toward basic and acidic residues.

This sequence belongs to the bacterial ribosomal protein bL32 family.

This Rhizobium meliloti (strain 1021) (Ensifer meliloti) protein is Large ribosomal subunit protein bL32.